The following is a 278-amino-acid chain: MSLALNPVAFNLGPIQVKWYGILMATGVLVATLMAINEGKKRQIMPDDFIDFLLWAVPIGFIGARIYYVVFEWGYFSQHPDQIIAIWNGGIAIYGGLIAGLIVLLVFCHQRMLPPFLMLDIIAPGVMAAQVIARWGNFMNQEAHGAKTTLSFLESLHLPHFIIQQMYIDGSYYQPTYLYESALNLVGLILILSLRHRKHLFKRGEVFFSYVIWYAAVRFFVEGMRTDSLYIANTIRVSQALSLILFFGAIILWVYRRKVIKPKWYLAGSGLKYPYNRD.

The next 4 membrane-spanning stretches (helical) occupy residues 19–39 (WYGI…INEG), 49–69 (FIDF…IYYV), 83–103 (IIAI…GLIV), and 112–132 (MLPP…AQVI). A 1,2-diacyl-sn-glycero-3-phospho-(1'-sn-glycerol) is bound at residue Arg134. Helical transmembrane passes span 174–194 (QPTY…ILSL), 204–224 (GEVF…VEGM), and 235–255 (IRVS…LWVY).

Belongs to the Lgt family.

It localises to the cell membrane. It carries out the reaction L-cysteinyl-[prolipoprotein] + a 1,2-diacyl-sn-glycero-3-phospho-(1'-sn-glycerol) = an S-1,2-diacyl-sn-glyceryl-L-cysteinyl-[prolipoprotein] + sn-glycerol 1-phosphate + H(+). It functions in the pathway protein modification; lipoprotein biosynthesis (diacylglyceryl transfer). In terms of biological role, catalyzes the transfer of the diacylglyceryl group from phosphatidylglycerol to the sulfhydryl group of the N-terminal cysteine of a prolipoprotein, the first step in the formation of mature lipoproteins. In Lactobacillus gasseri (strain ATCC 33323 / DSM 20243 / BCRC 14619 / CIP 102991 / JCM 1131 / KCTC 3163 / NCIMB 11718 / NCTC 13722 / AM63), this protein is Phosphatidylglycerol--prolipoprotein diacylglyceryl transferase.